We begin with the raw amino-acid sequence, 172 residues long: Light-harvesting complex-like protein OHP2, chloroplastic (172 aa).

The N-terminal 43 residues, 1–43 (MSVASPIQCIRILNPSSSSSSSTASSSFRFSTTTKPCVFIIRC), are a transit peptide targeting the chloroplast. The Stromal portion of the chain corresponds to 44–135 (SQTEGPLRRP…QPKNEISNGR (92 aa)). The disordered stretch occupies residues 45–90 (QTEGPLRRPSAPPTLREPQKPVPPSQPSSSPPPSPPPQKAVAVDGK). The span at 64–82 (KPVPPSQPSSSPPPSPPPQ) shows a compositional bias: pro residues. Residues 136–156 (WAMFGFAVGMLTEYATGSDLV) form a helical membrane-spanning segment. At 157–172 (DQVKILLSNFGILDLE) the chain is on the lumenal side.

It belongs to the ELIP/psbS family. As to quaternary structure, component of a high molecular weight complex containing OHP1, OHP2 and HCF244, and PSII core proteins D1/D2, HCF136 and HCF173. Forms a trimeric complex with OHP1 and HCF244 that mutually stabilizes each subunit.

The protein localises to the plastid. Its subcellular location is the chloroplast thylakoid membrane. In terms of biological role, may play a photoprotective role within PSI in response to light stress. Forms a trimeric complex with OHP1 and HCF244 that is required to promote PSII core subunit assembly. The trimeric complex forms a transient PSII reaction center-like complex with PsbA, PsbD, PsbE, PsbF and PsbI subunits in thylakoids for early assembly of PSII as well as PSII repair. The trimeric complex is required for the recruitment of ribosomes to the psbA mRNA during PSII biogenesis and repair. Forms a heterodimer with OHP1 that binds chlorophylls and carotenoids, and that may function in the delivery of pigments to the PsbA subunit of PSII. This chain is Light-harvesting complex-like protein OHP2, chloroplastic, found in Arabidopsis thaliana (Mouse-ear cress).